Reading from the N-terminus, the 249-residue chain is CDP-diacylglycerol pyrophosphatase (249 aa).

A helical transmembrane segment spans residues 5–25 (GYFLLAVIVIVAAAGVGYWKF).

The protein belongs to the Cdh family.

It is found in the cell inner membrane. It carries out the reaction a CDP-1,2-diacyl-sn-glycerol + H2O = a 1,2-diacyl-sn-glycero-3-phosphate + CMP + 2 H(+). It functions in the pathway phospholipid metabolism; CDP-diacylglycerol degradation; phosphatidate from CDP-diacylglycerol: step 1/1. This chain is CDP-diacylglycerol pyrophosphatase, found in Salmonella arizonae (strain ATCC BAA-731 / CDC346-86 / RSK2980).